The sequence spans 126 residues: Protein ApaG (126 aa).

Residues Ser2–His126 form the ApaG domain.

The chain is Protein ApaG from Pseudomonas paraeruginosa (strain DSM 24068 / PA7) (Pseudomonas aeruginosa (strain PA7)).